We begin with the raw amino-acid sequence, 523 residues long: 2,3-bisphosphoglycerate-independent phosphoglycerate mutase (523 aa).

Mn(2+) contacts are provided by aspartate 13 and serine 63. Serine 63 serves as the catalytic Phosphoserine intermediate. Residues histidine 124, 156 to 157 (RD), arginine 188, arginine 194, 268 to 271 (RSDR), and lysine 341 contribute to the substrate site. 5 residues coordinate Mn(2+): aspartate 408, histidine 412, aspartate 449, histidine 450, and histidine 467.

Belongs to the BPG-independent phosphoglycerate mutase family. As to quaternary structure, monomer. It depends on Mn(2+) as a cofactor.

It carries out the reaction (2R)-2-phosphoglycerate = (2R)-3-phosphoglycerate. It functions in the pathway carbohydrate degradation; glycolysis; pyruvate from D-glyceraldehyde 3-phosphate: step 3/5. In terms of biological role, catalyzes the interconversion of 2-phosphoglycerate and 3-phosphoglycerate. The protein is 2,3-bisphosphoglycerate-independent phosphoglycerate mutase of Salinibacter ruber (strain DSM 13855 / M31).